A 542-amino-acid polypeptide reads, in one-letter code: Phosphoenolpyruvate carboxykinase (ATP) (542 aa).

Residues arginine 67, tyrosine 208, and lysine 214 each coordinate substrate. ATP contacts are provided by residues lysine 214, histidine 233, and 249–257 (GLSGTGKTT). Mn(2+) is bound by residues lysine 214 and histidine 233. Aspartate 270 serves as a coordination point for Mn(2+). Residues glutamate 298, arginine 334, 450 to 451 (RI), and threonine 456 contribute to the ATP site. Arginine 334 lines the substrate pocket.

It belongs to the phosphoenolpyruvate carboxykinase (ATP) family. Monomer. Mn(2+) serves as cofactor.

The protein localises to the cytoplasm. It catalyses the reaction oxaloacetate + ATP = phosphoenolpyruvate + ADP + CO2. It functions in the pathway carbohydrate biosynthesis; gluconeogenesis. Functionally, involved in the gluconeogenesis. Catalyzes the conversion of oxaloacetate (OAA) to phosphoenolpyruvate (PEP) through direct phosphoryl transfer between the nucleoside triphosphate and OAA. The polypeptide is Phosphoenolpyruvate carboxykinase (ATP) (Vibrio vulnificus (strain YJ016)).